Consider the following 622-residue polypeptide: MARMQGCSVLVLDDSDKLVNKYDHKVTVVCSYDPQGMAVRLLQEGATPPKQLEEYLVSGAGTTHLSRGHTSHMLVVGGELVLFRFASRGDCQQFRSLLHKLSGKVNSVFNLRTEDSSASQYFQFYGYLSQQQNMMQDFVRTSTYQRAIYNNAQDFQNKIVLDVGAGSGILSFFAVQAGAAKVYAVEASNMAQYAQQLVSSNNLTDRIIVIAGKIEEIDLPERVDVIISEPMGYMLYNERMLETYLHGKKWLKPDGKMYPSRGDLHVAPFTDEALYMEQYNKANFWMQTEFHGVNLVALRDAAMKEYFRQPIVDTFDIRICMAKSIRHTTNFLTADEKDLHRIQIDVEFHMLETGTCHGLAFWFDVEFAGTCSQIWLSTSPTEPLTHWYQVRCLLQTPIFVKQGQVLSGKVVLAANQRQSYDVEIDLKLEGTMISSSNTLDLKNPYFRYTGAPVAAPPGSNTTSPSEAFWSQLDAQGARNAVNLVNGITVNGLGEVDMSSTIINTNLMAIGGGANGGGPGGHQPNIHPGLISSTGRQQQQQQQQQQQQAAVGPQQQQQQQSTTAQQLAMTPPIGCAATSTQNVAQHQLIGGAISPSLFTSPAQPILNSHHHHPGQPIHGNQFY.

Positions 118–425 constitute an SAM-dependent MTase PRMT-type domain; the sequence is ASQYFQFYGY…QRQSYDVEID (308 aa). The S-adenosyl-L-methionine site is built by Gln-131, Arg-140, Gly-164, Glu-186, Glu-215, and Thr-243. An Asymmetric dimethylarginine; by autocatalysis modification is found at Arg-478. 2 disordered regions span residues 513-556 and 602-622; these read ANGG…QQQQ and QPILNSHHHHPGQPIHGNQFY. The span at 536 to 556 shows a compositional bias: low complexity; sequence QQQQQQQQQQQQAAVGPQQQQ.

It belongs to the class I-like SAM-binding methyltransferase superfamily. Protein arginine N-methyltransferase family. In terms of assembly, homodimer. Post-translationally, the dimethylated protein is the major form.

Its subcellular location is the cytoplasm. It localises to the nucleus. The enzyme catalyses L-arginyl-[protein] + 2 S-adenosyl-L-methionine = N(omega),N(omega)-dimethyl-L-arginyl-[protein] + 2 S-adenosyl-L-homocysteine + 2 H(+). Functionally, methylates (mono- and asymmetric dimethylation) the guanidino nitrogens of arginyl residues in proteins. May methylate histone H3 at 'Arg-17' and activate transcription via chromatin remodeling. This chain is Histone-arginine methyltransferase CARMER, found in Anopheles gambiae (African malaria mosquito).